A 485-amino-acid chain; its full sequence is Aspartyl protease family protein 2 (485 aa).

The first 23 residues, M1–S23, serve as a signal peptide directing secretion. The segment at P43–S71 is disordered. Residues S50–S64 show a composition bias toward acidic residues. The 339-residue stretch at Y142–A480 folds into the Peptidase A1 domain. Catalysis depends on residues D160 and D365.

It belongs to the peptidase A1 family.

In terms of biological role, aspartyl protease. Not able to cleave BAG6. In Arabidopsis thaliana (Mouse-ear cress), this protein is Aspartyl protease family protein 2.